Here is a 304-residue protein sequence, read N- to C-terminus: Sulfate adenylyltransferase subunit 2 (304 aa).

Belongs to the PAPS reductase family. CysD subfamily. As to quaternary structure, heterodimer composed of CysD, the smaller subunit, and CysN.

The enzyme catalyses sulfate + ATP + H(+) = adenosine 5'-phosphosulfate + diphosphate. Its pathway is sulfur metabolism; hydrogen sulfide biosynthesis; sulfite from sulfate: step 1/3. In terms of biological role, with CysN forms the ATP sulfurylase (ATPS) that catalyzes the adenylation of sulfate producing adenosine 5'-phosphosulfate (APS) and diphosphate, the first enzymatic step in sulfur assimilation pathway. APS synthesis involves the formation of a high-energy phosphoric-sulfuric acid anhydride bond driven by GTP hydrolysis by CysN coupled to ATP hydrolysis by CysD. This Halorhodospira halophila (strain DSM 244 / SL1) (Ectothiorhodospira halophila (strain DSM 244 / SL1)) protein is Sulfate adenylyltransferase subunit 2.